A 47-amino-acid chain; its full sequence is Delta-actitoxin-Axm1d (47 aa).

3 disulfides stabilise this stretch: Cys-4–Cys-44, Cys-6–Cys-34, and Cys-27–Cys-45.

This sequence belongs to the sea anemone sodium channel inhibitory toxin family. Type I subfamily.

The protein resides in the secreted. It is found in the nematocyst. Functionally, binds specifically to voltage-gated sodium channels (Nav), thereby delaying their inactivation during signal transduction. Thus it strongly stimulates mammalian cardiac muscle contraction. In Anthopleura xanthogrammica (Giant green sea anemone), this protein is Delta-actitoxin-Axm1d.